Reading from the N-terminus, the 780-residue chain is ATP-dependent 6-phosphofructokinase, muscle type (780 aa).

At T2 the chain carries N-acetylthreonine. The segment at 2-390 (THEEHHAAKS…NWEVYKLLAH (389 aa)) is N-terminal catalytic PFK domain 1. ATP is bound by residues G25, 88-89 (RC), and 118-121 (GDGS). D119 serves as a coordination point for Mg(2+). Residues 164-166 (SID), R201, 208-210 (MGR), E264, R292, and 298-301 (HVQR) contribute to the substrate site. D166 acts as the Proton acceptor in catalysis. Position 377 is a phosphoserine (S377). The tract at residues 391–401 (VRPPVTKSGSY) is interdomain linker. Residues 402–780 (TVAVMNVGAP…TRKRSGEATI (379 aa)) form a C-terminal regulatory PFK domain 2 region. Beta-D-fructose 2,6-bisphosphate contacts are provided by residues R471 and 528 to 532 (TVSNN). S530 carries an O-linked (GlcNAc) serine glycan. N6-(2-hydroxyisobutyryl)lysine is present on K557. Beta-D-fructose 2,6-bisphosphate contacts are provided by residues R566, 573–575 (MGG), E629, R655, and 661–664 (HMQQ). S667 bears the Phosphoserine mark. R735 is a beta-D-fructose 2,6-bisphosphate binding site. Residue S775 is modified to Phosphoserine.

This sequence belongs to the phosphofructokinase type A (PFKA) family. ATP-dependent PFK group I subfamily. Eukaryotic two domain clade 'E' sub-subfamily. Homo- and heterotetramers. Phosphofructokinase (PFK) enzyme functions as a tetramer composed of different combinations of 3 types of subunits, called PFKM (M), PFKL (L) and PFKP (P). The composition of the PFK tetramer differs according to the tissue type it is present in. The kinetic and regulatory properties of the tetrameric enzyme are dependent on the subunit composition, hence can vary across tissues. Interacts (via C-terminus) with HK1 (via N-terminal spermatogenic cell-specific region). The cofactor is Mg(2+). In terms of processing, glcNAcylation decreases enzyme activity.

It is found in the cytoplasm. The enzyme catalyses beta-D-fructose 6-phosphate + ATP = beta-D-fructose 1,6-bisphosphate + ADP + H(+). It functions in the pathway carbohydrate degradation; glycolysis; D-glyceraldehyde 3-phosphate and glycerone phosphate from D-glucose: step 3/4. Its activity is regulated as follows. Allosterically activated by ADP, AMP, or fructose 2,6-bisphosphate, and allosterically inhibited by ATP or citrate. In terms of biological role, catalyzes the phosphorylation of D-fructose 6-phosphate to fructose 1,6-bisphosphate by ATP, the first committing step of glycolysis. The sequence is that of ATP-dependent 6-phosphofructokinase, muscle type (PFKM) from Sus scrofa (Pig).